The following is a 250-amino-acid chain: DNA repair protein RecO (250 aa).

Belongs to the RecO family.

Involved in DNA repair and RecF pathway recombination. This chain is DNA repair protein RecO, found in Granulibacter bethesdensis (strain ATCC BAA-1260 / CGDNIH1).